We begin with the raw amino-acid sequence, 1356 residues long: MASWLYECLCEAELAQYYPHFTALGLQKIDELAKVTMKDYSRLGVHDMNDRKRLFQLIKIIKIMQEEDKALGIPEHPLQASSLYTKPREFRSGPRRQLHFDSPSASKDKMANNETGSLSNFSVDEQKSTYLKVLEHMLPDDSQCQTKIRAPDASAADASMQTETNAPLFSSNYFSPQLGNCDIPVIQRVSHVSGYNYGIPHSCVRQITSENPWTEMEKIRVCVRKRPLGVREVRRGEVNVITVEDKETLLVHEKKEAVDLTQYILQHVFYFDEVFGEACSNQDVYLKTAHPLIQHIFNGGSATCFAYGQTGAGKTYTMIGTHQNPGLYALAAKDIFRQLKVSQSRRNLFVWISFYEIYCGQLYDLLNRRKRLFAREDSKHVVQIAGLRELQVDSVELLLQVILKGSKERSTGATGVNADSSRSHAIIQIQIKDSAKRTFGRISFIDLAGSERAADARDSDRQTKMEGAEINQSLLALKECIRALDQEHTHTPFRQSKLTQVLKDSFIGNAKTCMIANISPSHIATEHTLNTLRYADRVKELKKGVKCCASATSQNQTSANASPKRIQSSPVTLPGDKCSPKKVKLGLQQSLTVAPGPTKVKAHPLASHVPNVPFTSGPKTPGKKSSSRGSPTPEWDMKASPRKGTTRSGHSIKKGAESAPLCSEKSQIGSKIAVGWEGRASDPGEGLLRVRLPTRGKKVQPVQPVQKQLLSRPRLLANSHHLEATQDSKVGTPAGLAPEAWTNPILQQKEREEHLRFYHQQFQQPPLLKQKLNYQPLQRLLCQHRPSEGRLQSETGFPLHSNPENRDGAQAEDLDDSDFSEDSFSHGSSQPAMKQGSTALERSGSSFFLHQDREHSPEEQAAERQQCLLFSSETDGSKKRPADSWVYSRDPIISHRRGALSQSHSPSMVCPDWSKEEDSASSGPSPKDNRAQKPSSSQVDFVHHQKPGEAQVSDIRLEAFTSEVPEQAEGSLSSPSPENGLSFPLSHVAVSGSPDQRDRVCTPLREVSENRVTHTPGRVNSSTPFQEDSGEQIQMCSANASGLMAPLTMSLLETPCHEDLSSLEQIAQDGAGYGFMAEIVGGPAAGHTVPSYDQEAALPVSSATECLWLSSSPPDNRPSGDLPALSPSPIHQHSPDKLPGREAYQTRRPILLPENHMGSKLYDDRAEETELGGSLTFPRKPSSNIHAGVPYSTPFLTSCTGSSNGVGRPWAQERKHPTGVSCQELVSSTDSNKPHYNEDIAWLRHRPISRCLDSDSPVVPSCSSKALRTYCPLTPEQAQQVIIRAHKEQLDEMAELDLKEETLMTQMDSNDFEDFVTQLDEIMALKSRCIQSLRSQLQLYLTSHRPAAAPERTVVS.

The region spanning 1-64 is the SAM domain; the sequence is MASWLYECLC…FQLIKIIKIM (64 aa). Residues 93–119 form a disordered region; the sequence is GPRRQLHFDSPSASKDKMANNETGSLS. Phosphoserine is present on S102. A Kinesin motor domain is found at 218–541; the sequence is KIRVCVRKRP…LRYADRVKEL (324 aa). 308-315 lines the ATP pocket; it reads GQTGAGKT. S473 bears the Phosphoserine mark. The tract at residues 473-702 is interaction with MPHOSPH9; that stretch reads SLLALKECIR…PTRGKKVQPV (230 aa). Residues 552-571 are compositionally biased toward polar residues; the sequence is TSQNQTSANASPKRIQSSPV. Disordered regions lie at residues 552–581, 597–664, 788–840, 897–947, and 964–998; these read TSQN…CSPK, PTKV…LCSE, EGRL…STAL, RGAL…HQKP, and VPEQ…DQRD. S579 carries the phosphoserine modification. T615 bears the Phosphothreonine; by NEK2 mark. Position 616 is a phosphoserine; by NEK2 (S616). Residues S640, S817, and S820 each carry the phosphoserine modification. Residues 640-653 show a composition bias toward basic residues; that stretch reads SPRKGTTRSGHSIK. Acidic residues predominate over residues 810–821; sequence QAEDLDDSDFSE. A compositionally biased stretch (polar residues) spans 830–840; sequence QPAMKQGSTAL. Residues 970–979 are compositionally biased toward polar residues; that stretch reads GSLSSPSPEN. S1008 is subject to Phosphoserine. Positions 1109 to 1140 are disordered; the sequence is LSSSPPDNRPSGDLPALSPSPIHQHSPDKLPG.

Belongs to the TRAFAC class myosin-kinesin ATPase superfamily. Kinesin family. As to quaternary structure, interacts with CCP110, CEP97, TALPID3. Interacts with MPHOSPH9. Expressed in brain, spinal cord, and small intestine.

It localises to the cytoplasm. Its subcellular location is the cytoskeleton. The protein localises to the microtubule organizing center. It is found in the centrosome. The protein resides in the centriole. Functionally, microtubule-dependent motor protein that acts as a negative regulator of ciliogenesis by mediating recruitment of CCP110 to mother centriole in cycling cells, leading to restrict nucleation of cilia at centrioles. Mediates depolymerization of microtubules of centriolar origin, possibly to suppress aberrant cilia formation. Following activation by NEK2 involved in disassembly of primary cilium during G2/M phase but does not disassemble fully formed ciliary axonemes. As cilium assembly and disassembly is proposed to coexist in a dynamic equilibrium may suppress nascent cilium assembly and, potentially, ciliar re-assembly in cells that have already disassembled their cilia ensuring the completion of cilium removal in the later stages of the cell cycle. Plays an important role in recruiting MPHOSPH9, a negative regulator of cilia formation to the distal end of mother centriole. This is Kinesin-like protein KIF24 (Kif24) from Mus musculus (Mouse).